The sequence spans 216 residues: Guanylate kinase (216 aa).

In terms of domain architecture, Guanylate kinase-like spans 11–189; the sequence is GVLIVISGPS…AVKKIEAILL (179 aa). Position 18–25 (18–25) interacts with ATP; it reads GPSGAGKG.

It belongs to the guanylate kinase family.

The protein localises to the cytoplasm. The enzyme catalyses GMP + ATP = GDP + ADP. In terms of biological role, essential for recycling GMP and indirectly, cGMP. The polypeptide is Guanylate kinase (Clostridium perfringens (strain SM101 / Type A)).